The primary structure comprises 318 residues: Cobalamin biosynthesis protein CobD (318 aa).

Helical transmembrane passes span 56-76 (VLWLLVVGITWLVSWGFLWLM), 78-98 (EINPWLGWLAQVWMIYTLLAG), 153-173 (VDGVIAPLFFLMLGGAPLAMA), 204-224 (LANWLPARLSWVLLSAAAWLI), and 298-318 (MMASLLALLLFALTHLLLVGI).

The protein belongs to the CobD/CbiB family.

It is found in the cell membrane. Its pathway is cofactor biosynthesis; adenosylcobalamin biosynthesis. In terms of biological role, converts cobyric acid to cobinamide by the addition of aminopropanol on the F carboxylic group. This is Cobalamin biosynthesis protein CobD from Yersinia enterocolitica serotype O:8 / biotype 1B (strain NCTC 13174 / 8081).